The following is a 222-amino-acid chain: MFSKEVTESKVFQWFNDRLEVQAISDDIASKYVPPHVNIFYCLGGLTLTCFLIQFATGFAMTFYYKPTVTEAFASVQYIMNEVNFGWLIRSIHRWSASMMVLMMILHVFRVYLTGGFKKPRELTWVVGVMLAVTTVTFGVTGYSLPWDQVGYWAVKIVSGVPAAIPVVGDQLVTLMRGSESVGQATLTRFYSLHTFVLPWAIAVLLLLHFLMIRKQGISGPL.

Residues 39 to 59 form a helical membrane-spanning segment; that stretch reads IFYCLGGLTLTCFLIQFATGF. Tyrosine 41 contributes to the heme b binding site. A heme c-binding site is contributed by cysteine 42. Positions 90, 93, 94, 107, and 110 each coordinate heme b. 3 helical membrane-spanning segments follow: residues 97 to 117, 123 to 143, and 193 to 213; these read ASMMVLMMILHVFRVYLTGGF, LTWVVGVMLAVTTVTFGVTGY, and LHTFVLPWAIAVLLLLHFLMI. Positions 194 and 209 each coordinate heme b. Positions 214 and 218 each coordinate heme c. Serine 219 provides a ligand contact to heme b.

It belongs to the cytochrome b family. PetB subfamily. As to quaternary structure, the 4 large subunits of the cytochrome b6-f complex are cytochrome b6, subunit IV (17 kDa polypeptide, PetD), cytochrome f and the Rieske protein, while the 4 small subunits are PetG, PetL, PetM and PetN. The complex functions as a dimer. It depends on heme b as a cofactor. The cofactor is heme c.

The protein localises to the cellular thylakoid membrane. Component of the cytochrome b6-f complex, which mediates electron transfer between photosystem II (PSII) and photosystem I (PSI), cyclic electron flow around PSI, and state transitions. The chain is Cytochrome b6 from Synechocystis sp. (strain ATCC 27184 / PCC 6803 / Kazusa).